The sequence spans 82 residues: Omega-conotoxin-like 9 (82 aa).

An N-terminal signal peptide occupies residues 1–22 (MKLTCMMIAAVLFLTTWTFVTA). Residues 23 to 51 (DDSRYGLKNLFPKARHEMKNPEASKLNKR) constitute a propeptide that is removed on maturation. Cystine bridges form between Cys-54/Cys-69, Cys-61/Cys-73, and Cys-68/Cys-77.

Belongs to the conotoxin O1 superfamily. Expressed by the venom duct.

It localises to the secreted. Omega-conotoxins act at presynaptic membranes, they bind and block voltage-gated calcium channels (Cav). The chain is Omega-conotoxin-like 9 from Conus striatus (Striated cone).